The chain runs to 473 residues: tRNA modification GTPase MnmE (473 aa).

Residues Arg31, Glu95, and Arg134 each coordinate (6S)-5-formyl-5,6,7,8-tetrahydrofolate. The TrmE-type G domain maps to 230 to 394 (GVSTVIAGKP…LKQHMGDLVK (165 aa)). Residues 240–245 (NAGKST), 259–265 (SHMPGTT), and 284–287 (DTAG) contribute to the GTP site. Mg(2+)-binding residues include Ser244 and Thr265. Residue Lys473 participates in (6S)-5-formyl-5,6,7,8-tetrahydrofolate binding.

The protein belongs to the TRAFAC class TrmE-Era-EngA-EngB-Septin-like GTPase superfamily. TrmE GTPase family. In terms of assembly, homodimer. Heterotetramer of two MnmE and two MnmG subunits. Requires K(+) as cofactor.

The protein localises to the cytoplasm. Functionally, exhibits a very high intrinsic GTPase hydrolysis rate. Involved in the addition of a carboxymethylaminomethyl (cmnm) group at the wobble position (U34) of certain tRNAs, forming tRNA-cmnm(5)s(2)U34. This is tRNA modification GTPase MnmE from Chlorobaculum tepidum (strain ATCC 49652 / DSM 12025 / NBRC 103806 / TLS) (Chlorobium tepidum).